Consider the following 862-residue polypeptide: Bifunctional uridylyltransferase/uridylyl-removing enzyme (862 aa).

The interval 1–328 is uridylyltransferase; the sequence is MSTAAIPTDA…FPRRAGAAIV (328 aa). A uridylyl-removing region spans residues 329-685; the sequence is INERFQAVRE…ARVSDADQGV (357 aa). Residues 447–563 enclose the HD domain; the sequence is VDQHIMMVLR…GRFADTVGTE (117 aa). ACT domains follow at residues 686-765 and 794-862; these read QVMV…DRPS and ILSL…RLHI.

It belongs to the GlnD family. Mg(2+) is required as a cofactor.

It catalyses the reaction [protein-PII]-L-tyrosine + UTP = [protein-PII]-uridylyl-L-tyrosine + diphosphate. The enzyme catalyses [protein-PII]-uridylyl-L-tyrosine + H2O = [protein-PII]-L-tyrosine + UMP + H(+). With respect to regulation, uridylyltransferase (UTase) activity is inhibited by glutamine, while glutamine activates uridylyl-removing (UR) activity. Functionally, modifies, by uridylylation and deuridylylation, the PII regulatory proteins (GlnB and homologs), in response to the nitrogen status of the cell that GlnD senses through the glutamine level. Under low glutamine levels, catalyzes the conversion of the PII proteins and UTP to PII-UMP and PPi, while under higher glutamine levels, GlnD hydrolyzes PII-UMP to PII and UMP (deuridylylation). Thus, controls uridylylation state and activity of the PII proteins, and plays an important role in the regulation of nitrogen assimilation and metabolism. The protein is Bifunctional uridylyltransferase/uridylyl-removing enzyme of Aromatoleum aromaticum (strain DSM 19018 / LMG 30748 / EbN1) (Azoarcus sp. (strain EbN1)).